Here is a 218-residue protein sequence, read N- to C-terminus: ATP phosphoribosyltransferase (218 aa).

This sequence belongs to the ATP phosphoribosyltransferase family. Short subfamily. As to quaternary structure, heteromultimer composed of HisG and HisZ subunits.

It localises to the cytoplasm. The enzyme catalyses 1-(5-phospho-beta-D-ribosyl)-ATP + diphosphate = 5-phospho-alpha-D-ribose 1-diphosphate + ATP. It participates in amino-acid biosynthesis; L-histidine biosynthesis; L-histidine from 5-phospho-alpha-D-ribose 1-diphosphate: step 1/9. Functionally, catalyzes the condensation of ATP and 5-phosphoribose 1-diphosphate to form N'-(5'-phosphoribosyl)-ATP (PR-ATP). Has a crucial role in the pathway because the rate of histidine biosynthesis seems to be controlled primarily by regulation of HisG enzymatic activity. In Burkholderia thailandensis (strain ATCC 700388 / DSM 13276 / CCUG 48851 / CIP 106301 / E264), this protein is ATP phosphoribosyltransferase.